The primary structure comprises 529 residues: Nuclear protein localization protein 4 homolog 1 (529 aa).

The 138-residue stretch at 129-266 folds into the MPN domain; sequence IQIENQELVN…ITEYSMDRHY (138 aa). The RanBP2-type zinc-finger motif lies at 499–529; the sequence is SGGAVWNCGHCTFQNEAARQDCSMCGLPAAD.

It belongs to the NPL4 family. Forms a complex composed of ubxn-3, ufd-1, npl-4.1 and cdc-48.1; within the complex, interacts with ufd-1 and ubxn-3. Interacts with ufd-1. Interacts with elc-1/elongin C; the interaction may mediate the interaction between the npl-4-ufd-1-cdc-48 complex and the E3 ubiquitin ligase cul-2 complex.

It is found in the cytoplasm. The protein resides in the nucleus. In association with ufd-1 and ATPase cdc-48.1 and/or cdc-48.2, involved in the cytoplasmic elimination of misfolded proteins exported from the ER. This pathway, known as ERAD, prevents the activation of the unfolded protein response (UPR) caused by the accumulation of misfolded proteins in the ER. During S phase and in association with ufd-1, cdc-48.1 and/or cdc-48.2 and ubxn-3, ensures the degradation of DNA licensing factor cdt-1 after the initiation of DNA replication and thus the disassembly of the DNA replication CGM helicase complex by promoting the dissociation from chromatin of several of its components including cdc-45 and sld-5. Regulates ubxn-3 nuclear localization during S phase. This chain is Nuclear protein localization protein 4 homolog 1, found in Caenorhabditis elegans.